We begin with the raw amino-acid sequence, 597 residues long: Myrcene synthase, chloroplastic (597 aa).

The N-terminal 56 residues, 1–56, are a transit peptide targeting the chloroplast; it reads MALKLLTSLPMYNFSRVPVSSKDPILLVTSRTRNGYLARPVQCMVANKVSTSPDIL. 5 residues coordinate (2E)-geranyl diphosphate: Arg310, Asp347, Asp351, Arg488, and Asp491. The Mg(2+) site is built by Asp347 and Asp351. The DDXXD motif motif lies at 347–351; the sequence is DDVYD. Residues Asp491, Thr495, and Glu499 each contribute to the Mg(2+) site.

It belongs to the terpene synthase family. Tpsb subfamily. Mg(2+) is required as a cofactor. The cofactor is Mn(2+).

The protein localises to the plastid. It localises to the chloroplast. It catalyses the reaction (2E)-geranyl diphosphate = beta-myrcene + diphosphate. Functionally, involved in monoterpene (C10) biosynthesis. The major product is myrcene followed by minor amounts (1.2%) of the cyclic monoterpene limonene. The protein is Myrcene synthase, chloroplastic of Quercus ilex (Holly oak).